A 398-amino-acid chain; its full sequence is Dual-specificity RNA methyltransferase RlmN (398 aa).

The active-site Proton acceptor is E119. One can recognise a Radical SAM core domain in the interval 125-364 (DGDRATLCVS…TIVRKTRGDD (240 aa)). A disulfide bridge connects residues C132 and C369. C139, C143, and C146 together coordinate [4Fe-4S] cluster. S-adenosyl-L-methionine-binding positions include 193-194 (GE), S225, 247-249 (SLH), and N326. The active-site S-methylcysteine intermediate is C369.

Belongs to the radical SAM superfamily. RlmN family. [4Fe-4S] cluster is required as a cofactor.

It is found in the cytoplasm. It catalyses the reaction adenosine(2503) in 23S rRNA + 2 reduced [2Fe-2S]-[ferredoxin] + 2 S-adenosyl-L-methionine = 2-methyladenosine(2503) in 23S rRNA + 5'-deoxyadenosine + L-methionine + 2 oxidized [2Fe-2S]-[ferredoxin] + S-adenosyl-L-homocysteine. It carries out the reaction adenosine(37) in tRNA + 2 reduced [2Fe-2S]-[ferredoxin] + 2 S-adenosyl-L-methionine = 2-methyladenosine(37) in tRNA + 5'-deoxyadenosine + L-methionine + 2 oxidized [2Fe-2S]-[ferredoxin] + S-adenosyl-L-homocysteine. In terms of biological role, specifically methylates position 2 of adenine 2503 in 23S rRNA and position 2 of adenine 37 in tRNAs. m2A2503 modification seems to play a crucial role in the proofreading step occurring at the peptidyl transferase center and thus would serve to optimize ribosomal fidelity. The protein is Dual-specificity RNA methyltransferase RlmN of Serratia proteamaculans (strain 568).